Reading from the N-terminus, the 619-residue chain is Lateral signaling target protein 2 homolog (619 aa).

Residues 501–561 form an FYVE-type zinc finger; it reads DSDCEQCTAC…VCNLCFLYKI (61 aa). Zn(2+)-binding residues include C507, C510, C523, C526, C531, C534, C553, and C556. Residues 598–619 are disordered; sequence HERSQDGSQSNESPTATTATTI. Residues 603 to 619 show a composition bias toward polar residues; the sequence is DGSQSNESPTATTATTI.

It belongs to the lst-2 family.

Its function is as follows. Negative regulator of epidermal growth factor receptor (EGFR) signaling. The sequence is that of Lateral signaling target protein 2 homolog from Brugia malayi (Filarial nematode worm).